Consider the following 215-residue polypeptide: MNAPASSPARRTKKLPPLRVGIGGPVGSGKTTLLEMLCKAMRDTYDLVAITNDIYTKEDQRLLTVAGALPEERIMGVETGGCPHTAIREDASINLEAVDRMLSRFPDADIVFIESGGDNLAATFSPELSDLTIYVIDVAGGEKIPRKGGPGITKSDLLVINKTDLAPLVGANLDVMASDTKKMRGERPYVMTNLKALDGVADVIAFIEKKGLLTV.

The segment at 1–21 (MNAPASSPARRTKKLPPLRVG) is disordered. 24–31 (GPVGSGKT) contributes to the GTP binding site.

Belongs to the SIMIBI class G3E GTPase family. UreG subfamily. Homodimer. UreD, UreF and UreG form a complex that acts as a GTP-hydrolysis-dependent molecular chaperone, activating the urease apoprotein by helping to assemble the nickel containing metallocenter of UreC. The UreE protein probably delivers the nickel.

The protein localises to the cytoplasm. Facilitates the functional incorporation of the urease nickel metallocenter. This process requires GTP hydrolysis, probably effectuated by UreG. The sequence is that of Urease accessory protein UreG from Burkholderia vietnamiensis (strain G4 / LMG 22486) (Burkholderia cepacia (strain R1808)).